Consider the following 246-residue polypeptide: Serine protease 1 (246 aa).

The first 15 residues, 1-15, serve as a signal peptide directing secretion; it reads MKTFIFLALLGATVA. Positions 16 to 23 are cleaved as a propeptide — activation peptide; sequence FPIDDDDK. The Peptidase S1 domain maps to 24–244; sequence IVGGYTCSRN…YVSWIQQTIA (221 aa). 6 disulfides stabilise this stretch: C30-C160, C48-C64, C132-C233, C139-C206, C171-C185, and C196-C220. H63 (charge relay system) is an active-site residue. Ca(2+)-binding residues include E75, N77, V80, and E85. D107 functions as the Charge relay system in the catalytic mechanism. Residue S200 is the Charge relay system of the active site.

The protein belongs to the peptidase S1 family. Interacts with SERPINA1. Requires Ca(2+) as cofactor.

The protein resides in the secreted. Its subcellular location is the extracellular space. The enzyme catalyses Preferential cleavage: Arg-|-Xaa, Lys-|-Xaa.. This Canis lupus familiaris (Dog) protein is Serine protease 1.